The following is a 344-amino-acid chain: Phosphoribosylformylglycinamidine cyclo-ligase (344 aa).

The protein belongs to the AIR synthase family.

It is found in the cytoplasm. The enzyme catalyses 2-formamido-N(1)-(5-O-phospho-beta-D-ribosyl)acetamidine + ATP = 5-amino-1-(5-phospho-beta-D-ribosyl)imidazole + ADP + phosphate + H(+). The protein operates within purine metabolism; IMP biosynthesis via de novo pathway; 5-amino-1-(5-phospho-D-ribosyl)imidazole from N(2)-formyl-N(1)-(5-phospho-D-ribosyl)glycinamide: step 2/2. The polypeptide is Phosphoribosylformylglycinamidine cyclo-ligase (Synechococcus sp. (strain RCC307)).